A 151-amino-acid chain; its full sequence is 3-dehydroquinate dehydratase (151 aa).

Residue tyrosine 24 is the Proton acceptor of the active site. The substrate site is built by asparagine 76, histidine 82, and aspartate 89. Catalysis depends on histidine 102, which acts as the Proton donor. Residues 103-104 and arginine 113 contribute to the substrate site; that span reads LS.

It belongs to the type-II 3-dehydroquinase family. Homododecamer.

It carries out the reaction 3-dehydroquinate = 3-dehydroshikimate + H2O. Its pathway is metabolic intermediate biosynthesis; chorismate biosynthesis; chorismate from D-erythrose 4-phosphate and phosphoenolpyruvate: step 3/7. Its function is as follows. Catalyzes a trans-dehydration via an enolate intermediate. The protein is 3-dehydroquinate dehydratase of Acinetobacter baumannii (strain AB307-0294).